The sequence spans 119 residues: Large ribosomal subunit protein uL18 (119 aa).

Residues 1–20 form a disordered region; sequence MSQIDKASRRQKIKDRSRVK. Positions 9-20 are enriched in basic residues; that stretch reads RRQKIKDRSRVK.

It belongs to the universal ribosomal protein uL18 family. In terms of assembly, part of the 50S ribosomal subunit; part of the 5S rRNA/L5/L18/L25 subcomplex. Contacts the 5S and 23S rRNAs.

Its function is as follows. This is one of the proteins that bind and probably mediate the attachment of the 5S RNA into the large ribosomal subunit, where it forms part of the central protuberance. The protein is Large ribosomal subunit protein uL18 of Chlorobium phaeobacteroides (strain DSM 266 / SMG 266 / 2430).